The sequence spans 511 residues: ADP,ATP carrier protein 4 (511 aa).

Helical transmembrane passes span 34–54, 71–91, 102–122, 157–177, 192–212, 231–251, 296–316, 330–350, 361–381, 390–410, 453–473, and 476–496; these read VSKFLFITLLMFCILFIQNLI, ISFLKFWGVMPSAFLMTAIYV, IFYLIISIFLAFFALFAYVIF, FSLFYIIAELWPNVVFALLFW, FYPLFGLLSQTGIYLAGQFLE, FHTLSIQIILTIVLILGIIAI, LIATLLICYGIAINLVEGPWK, AAFIGSYLSYTGVFTILFVVL, FTAAVITPLIVFITGILFFAV, LIIANFILTDPALIAITIGAI, LGKSGSAFLQSLVFIILPSAS, and SISICLMIIFIITCLTWLWAT.

This sequence belongs to the ADP/ATP translocase tlc family.

It is found in the cell membrane. In terms of biological role, provides the rickettsial cell with host ATP in exchange for rickettsial ADP. This is an obligate exchange system. This energy acquiring activity is an important component of rickettsial parasitism. The sequence is that of ADP,ATP carrier protein 4 (tlcD) from Rickettsia felis (strain ATCC VR-1525 / URRWXCal2) (Rickettsia azadi).